The sequence spans 465 residues: ATP-sulfurylase 3, chloroplastic (465 aa).

The transit peptide at 1 to 49 (MASMSTVFPKPTSFISQPLTKSHKSDSVTTSISFPSNSKTRSLRTISVR) directs the protein to the chloroplast.

It belongs to the sulfate adenylyltransferase family. As to quaternary structure, homotetramer.

The protein resides in the plastid. It is found in the chloroplast stroma. It catalyses the reaction sulfate + ATP + H(+) = adenosine 5'-phosphosulfate + diphosphate. Its pathway is sulfur metabolism; hydrogen sulfide biosynthesis; sulfite from sulfate: step 1/3. In Arabidopsis thaliana (Mouse-ear cress), this protein is ATP-sulfurylase 3, chloroplastic (APS3).